The primary structure comprises 414 residues: Methylthioribose-1-phosphate isomerase (414 aa).

Positions 205 to 215 (SQSQGSENPPS) are enriched in polar residues. The tract at residues 205–224 (SQSQGSENPPSKKQKKDAAP) is disordered. The Proton donor role is filled by Asp283.

This sequence belongs to the eIF-2B alpha/beta/delta subunits family. MtnA subfamily.

It is found in the cytoplasm. Its subcellular location is the nucleus. It catalyses the reaction 5-(methylsulfanyl)-alpha-D-ribose 1-phosphate = 5-(methylsulfanyl)-D-ribulose 1-phosphate. Its pathway is amino-acid biosynthesis; L-methionine biosynthesis via salvage pathway; L-methionine from S-methyl-5-thio-alpha-D-ribose 1-phosphate: step 1/6. In terms of biological role, catalyzes the interconversion of methylthioribose-1-phosphate (MTR-1-P) into methylthioribulose-1-phosphate (MTRu-1-P). In Zygosaccharomyces rouxii (strain ATCC 2623 / CBS 732 / NBRC 1130 / NCYC 568 / NRRL Y-229), this protein is Methylthioribose-1-phosphate isomerase.